A 345-amino-acid chain; its full sequence is Biotin synthase (345 aa).

Positions 38–256 constitute a Radical SAM core domain; it reads QQVQVSTLLS…IAVARIMMPS (219 aa). The [4Fe-4S] cluster site is built by C53, C57, and C60. The [2Fe-2S] cluster site is built by C97, C128, C188, and R260.

It belongs to the radical SAM superfamily. Biotin synthase family. In terms of assembly, homodimer. [4Fe-4S] cluster serves as cofactor. Requires [2Fe-2S] cluster as cofactor.

It catalyses the reaction (4R,5S)-dethiobiotin + (sulfur carrier)-SH + 2 reduced [2Fe-2S]-[ferredoxin] + 2 S-adenosyl-L-methionine = (sulfur carrier)-H + biotin + 2 5'-deoxyadenosine + 2 L-methionine + 2 oxidized [2Fe-2S]-[ferredoxin]. It participates in cofactor biosynthesis; biotin biosynthesis; biotin from 7,8-diaminononanoate: step 2/2. Its function is as follows. Catalyzes the conversion of dethiobiotin (DTB) to biotin by the insertion of a sulfur atom into dethiobiotin via a radical-based mechanism. This Photorhabdus laumondii subsp. laumondii (strain DSM 15139 / CIP 105565 / TT01) (Photorhabdus luminescens subsp. laumondii) protein is Biotin synthase.